Reading from the N-terminus, the 72-residue chain is uncharacterized protein (72 aa).

This is an uncharacterized protein from Escherichia coli (Bacteriophage T4).